We begin with the raw amino-acid sequence, 115 residues long: ComG operon protein 5 (115 aa).

Residues 1-7 (MWRENKG) constitute a propeptide, leader sequence. Residue Phe-8 is modified to N-methylphenylalanine. Residues 13–31 (TMSALSLWLFVLLTVVPLW) traverse the membrane as a helical segment.

In terms of processing, processing of ComGE in competent cells requires ComC.

The protein resides in the cell membrane. It is found in the cell surface. In terms of biological role, required for transformation and DNA binding. This chain is ComG operon protein 5 (comGE), found in Bacillus subtilis (strain 168).